The sequence spans 136 residues: MLQPKRMKFRKMFKGRNRGLANGTEVSFGEFGLKAVGRGRLTARQIESARRAMTRHIKRQGQIWIRVFPDKPITSKPLEVRMGKGKGNVEYWVCQIQPGKVLYEMNGVSEELAREAFTLAAAKLPIKTTFVTKTVM.

It belongs to the universal ribosomal protein uL16 family. Part of the 50S ribosomal subunit.

Its function is as follows. Binds 23S rRNA and is also seen to make contacts with the A and possibly P site tRNAs. This Shewanella loihica (strain ATCC BAA-1088 / PV-4) protein is Large ribosomal subunit protein uL16.